A 64-amino-acid chain; its full sequence is Conotoxin mr5.3 (64 aa).

The N-terminal stretch at 1–19 is a signal peptide; it reads MRCVPVFVILLLLIASVPS. Positions 20–48 are excised as a propeptide; it reads VDAQLKTKDDMPLASSHANVKRTLQILRN. Residues Glu-56 and Glu-60 each carry the 4-carboxyglutamate modification.

In terms of processing, contains 2 disulfide bonds that can be either 'C1-C3, C2-C4' or 'C1-C4, C2-C3', since these disulfide connectivities have been observed for conotoxins with cysteine framework V (for examples, see AC P0DQQ7 and AC P81755). In terms of tissue distribution, expressed by the venom duct.

It is found in the secreted. This chain is Conotoxin mr5.3, found in Conus marmoreus (Marble cone).